The following is a 472-amino-acid chain: Phosphoenolpyruvate carboxykinase (ATP), glycosomal (472 aa).

G221–T228 is a binding site for ATP.

This sequence belongs to the phosphoenolpyruvate carboxykinase (ATP) family. As to quaternary structure, homodimer.

The protein localises to the glycosome. The enzyme catalyses oxaloacetate + ATP = phosphoenolpyruvate + ADP + CO2. It functions in the pathway carbohydrate biosynthesis; gluconeogenesis. P60 has the capability to bind to microtubules and membrane vesicles in vitro. The protein is Phosphoenolpyruvate carboxykinase (ATP), glycosomal of Trypanosoma brucei brucei.